Here is a 515-residue protein sequence, read N- to C-terminus: 2,3-bisphosphoglycerate-independent phosphoglycerate mutase (515 aa).

The Mn(2+) site is built by Asp-14 and Ser-64. Ser-64 functions as the Phosphoserine intermediate in the catalytic mechanism. Substrate is bound by residues His-125, 155–156 (RD), Arg-187, Arg-193, 263–266 (RADR), and Lys-337. Residues Asp-404, His-408, Asp-445, His-446, and His-464 each contribute to the Mn(2+) site.

Belongs to the BPG-independent phosphoglycerate mutase family. As to quaternary structure, monomer. Mn(2+) is required as a cofactor.

The catalysed reaction is (2R)-2-phosphoglycerate = (2R)-3-phosphoglycerate. It functions in the pathway carbohydrate degradation; glycolysis; pyruvate from D-glyceraldehyde 3-phosphate: step 3/5. Catalyzes the interconversion of 2-phosphoglycerate and 3-phosphoglycerate. This is 2,3-bisphosphoglycerate-independent phosphoglycerate mutase from Yersinia pseudotuberculosis serotype O:1b (strain IP 31758).